A 170-amino-acid chain; its full sequence is Photosystem I assembly protein Ycf3 (170 aa).

TPR repeat units follow at residues 35-68 (AFTY…EVDA), 72-105 (SYIL…NPSL), and 120-153 (GEQA…APTN).

Belongs to the Ycf3 family.

The protein resides in the plastid. It localises to the chloroplast thylakoid membrane. Functionally, essential for the assembly of the photosystem I (PSI) complex. May act as a chaperone-like factor to guide the assembly of the PSI subunits. This chain is Photosystem I assembly protein Ycf3, found in Tetradesmus obliquus (Green alga).